Consider the following 423-residue polypeptide: Aspartic protease-like protein pytH (423 aa).

Residues 1–16 (MWLSVALLTLLDGALA) form the signal peptide. The region spanning 38-416 (TTDAIQIGTP…DFDKLRVGLA (379 aa)) is the Peptidase A1 domain. Aspartate 56 is a catalytic residue. N-linked (GlcNAc...) asparagine glycans are attached at residues asparagine 88, asparagine 97, asparagine 168, asparagine 196, asparagine 231, and asparagine 279. The active site involves aspartate 291. The N-linked (GlcNAc...) asparagine glycan is linked to asparagine 330. An intrachain disulfide couples cysteine 338 to cysteine 377.

It belongs to the peptidase A1 family.

It functions in the pathway secondary metabolite biosynthesis. Functionally, aspartic protease-like protein; part of the gene cluster that mediates the biosynthesis of pyranterreones, a family of antioxidative compounds. The first step of pyranonigrins biosynthesis is performed by the hybrid PKS-NRPS synthetase pytA that condenses 4 malonyl-CoA units ato the acetyl starter unit by the modular PKS of pytA. The acyl chain is then connected to an L-serine through the amide bond by the modular NRPS of pytA. A tetramic acid is formed and released from the PKS-NRPS pytA to give pyranterreone 5 with the help of the thioesterase pytI. Pyranterreone 5 could be methylated by pytC to afford pyranterreone 6. Both pyranterreones 5 and 6 are subsequently oxidized by the FAD-linked oxidoreductase pytB and the cytochrome P450 monooxygenase pytD to form the fused gamma-pyrone core, resulting in pyranterreones 7 and 11, respectively. The hydroxy group at C-8 of pyranterreones 7 and 11 are dehydrated by the aspartyl protease pytH to form a delta-7 double bond to give pyranterreones 3 and 1, 2 accordingly. The exo-methylene of pyranterreone 3 could be reduced into a pendant methyl by reductase pytE to provide pyranterreone 4, also known as cordylactam. Pyranterreone 4 can be reconverted to pyranterreone 3 through pytB-catalyzed dehydrogenation or further oxidized to pyranterreones 9 and 10. The chain is Aspartic protease-like protein pytH from Aspergillus terreus (strain NIH 2624 / FGSC A1156).